A 39-amino-acid polypeptide reads, in one-letter code: Protein MchX (39 aa).

Residues 15–37 (SALSSTLLLSLIMSATLLEYSLS) traverse the membrane as a helical segment.

It localises to the cell inner membrane. Its function is as follows. Required for microcin H47 production. Possibly involved in a regulatory loop modulating its own expression and that of MchI and MchB. This is Protein MchX (mchX) from Escherichia coli.